The sequence spans 68 residues: Molybdenum-pterin-binding protein 2 (68 aa).

The Mop domain occupies 2-68; that stretch reads SISARNQLKG…VKSTDVMILA (67 aa).

In terms of biological role, binds one mole of molybdenum per mole of protein and contains a pterin. The protein is Molybdenum-pterin-binding protein 2 (mopII) of Clostridium pasteurianum.